A 364-amino-acid polypeptide reads, in one-letter code: 4-hydroxythreonine-4-phosphate dehydrogenase (364 aa).

The substrate site is built by histidine 148 and threonine 149. Histidine 177, histidine 216, and histidine 301 together coordinate a divalent metal cation. 3 residues coordinate substrate: lysine 309, asparagine 318, and arginine 327.

Belongs to the PdxA family. As to quaternary structure, homodimer. Zn(2+) is required as a cofactor. It depends on Mg(2+) as a cofactor. Co(2+) serves as cofactor.

It localises to the cytoplasm. The enzyme catalyses 4-(phosphooxy)-L-threonine + NAD(+) = 3-amino-2-oxopropyl phosphate + CO2 + NADH. The protein operates within cofactor biosynthesis; pyridoxine 5'-phosphate biosynthesis; pyridoxine 5'-phosphate from D-erythrose 4-phosphate: step 4/5. Its function is as follows. Catalyzes the NAD(P)-dependent oxidation of 4-(phosphooxy)-L-threonine (HTP) into 2-amino-3-oxo-4-(phosphooxy)butyric acid which spontaneously decarboxylates to form 3-amino-2-oxopropyl phosphate (AHAP). The sequence is that of 4-hydroxythreonine-4-phosphate dehydrogenase from Campylobacter jejuni (strain RM1221).